A 718-amino-acid polypeptide reads, in one-letter code: Catalase-peroxidase 1 (718 aa).

The segment at residues 93-221 is a cross-link (tryptophyl-tyrosyl-methioninium (Trp-Tyr) (with M-247)); sequence WHSAGTYRIA…LAAVMMGLIY (129 aa). His-94 functions as the Proton acceptor in the catalytic mechanism. Positions 221-247 form a cross-link, tryptophyl-tyrosyl-methioninium (Tyr-Met) (with W-93); the sequence is YVNPEGVDGNPDPLKTAQDMRVTFARM. His-262 contributes to the heme b binding site.

This sequence belongs to the peroxidase family. Peroxidase/catalase subfamily. In terms of assembly, homodimer or homotetramer. Heme b serves as cofactor. In terms of processing, formation of the three residue Trp-Tyr-Met cross-link is important for the catalase, but not the peroxidase activity of the enzyme.

It catalyses the reaction H2O2 + AH2 = A + 2 H2O. The enzyme catalyses 2 H2O2 = O2 + 2 H2O. In terms of biological role, bifunctional enzyme with both catalase and broad-spectrum peroxidase activity. The protein is Catalase-peroxidase 1 of Shewanella amazonensis (strain ATCC BAA-1098 / SB2B).